The chain runs to 275 residues: MKTGMFTCGHQRLPIEHAFRDASELGYDGIEIWGGRPHAFAPDLKAGGIKQIKALAQTYQMPIIGYTPETNGYPYNMMLGDEHMRRESLDMIKLAMDMAKEMNAGYTLISAAHAGYLTPPNVIWGRLAENLSELCEYAENIGMDLILEPLTPYESNVVCNANDVLHALALVPSPRLFSMVDICAPYVQAEPVMSYFDKLGDKLRHLHIVDSDGASDTHYIPGEGKMPLRELMRDIIDRGYEGYCTVELVTMYMNEPRLYARQALERFRALLPEDE.

The Proton donor/acceptor role is filled by Glu-148. The a divalent metal cation site is built by Glu-148, Asp-181, His-207, and Glu-247. Glu-247 functions as the Proton donor/acceptor in the catalytic mechanism.

This sequence belongs to the FrlC family. In terms of assembly, homooctamer. Requires Ni(2+) as cofactor. The cofactor is Co(2+).

It catalyses the reaction N(6)-(D-psicosyl)-L-lysine = N(6)-(D-fructosyl)-L-lysine. In terms of biological role, catalyzes the reversible interconversion of fructoselysine with its C-3 epimer, psicoselysine. Allows E.coli to utilize psicoselysine for growth. Does not act on psicose or fructoselysine 6-phosphate. The sequence is that of Fructoselysine 3-epimerase (frlC) from Escherichia coli O157:H7.